Reading from the N-terminus, the 298-residue chain is ADP/ATP translocase 1 (298 aa).

The Mitochondrial intermembrane portion of the chain corresponds to methionine 1 to serine 7. Serine 2 is subject to N-acetylserine. The Solcar 1 repeat unit spans residues leucine 6–isoleucine 98. Serine 7 is modified (phosphoserine). A helical membrane pass occupies residues phenylalanine 8–glutamine 37. The Mitochondrial matrix portion of the chain corresponds to valine 38–asparagine 74. Lysine 52 is modified (N6,N6,N6-trimethyllysine). Lysine 52 bears the N6-methyllysine mark. A helical membrane pass occupies residues leucine 75–phenylalanine 99. ADP-binding residues include arginine 80 and lysine 92. The Mitochondrial intermembrane portion of the chain corresponds to leucine 100 to phenylalanine 109. The helical transmembrane segment at tryptophan 110 to phenylalanine 130 threads the bilayer. Solcar repeat units follow at residues arginine 111–methionine 201 and valine 212–phenylalanine 297. Topologically, residues valine 131 to asparagine 178 are mitochondrial matrix. Lysine 147 is modified (N6-succinyllysine). Cysteine 160 is modified (S-nitrosocysteine). A helical membrane pass occupies residues valine 179–lysine 199. The Mitochondrial intermembrane portion of the chain corresponds to glycine 200–isoleucine 210. A helical transmembrane segment spans residues isoleucine 211–phenylalanine 231. Over aspartate 232–glycine 273 the chain is Mitochondrial matrix. Arginine 235 contacts ADP. Residues arginine 235–methionine 240 are important for transport activity. Positions arginine 235–methionine 240 match the Nucleotide carrier signature motif motif. N6-succinyllysine is present on residues lysine 245 and lysine 272. A helical transmembrane segment spans residues alanine 274–tyrosine 291. At aspartate 292–valine 298 the chain is on the mitochondrial intermembrane side.

It belongs to the mitochondrial carrier (TC 2.A.29) family. Monomer. Found in a complex with ARL2, ARL2BP and SLC25A4/ANT1. Interacts with ARL2BP. Interacts with TIMM44; leading to inhibit the presequence translocase TIMM23, thereby promoting stabilization of PINK1. In terms of processing, under cell death induction, transglutaminated by TGM2. Transglutamination leads to formation of covalent cross-links between a glutamine and the epsilon-amino group of a lysine residue, forming polymers. Detected in heart muscle (at protein level). Detected in heart.

It is found in the mitochondrion inner membrane. Its subcellular location is the membrane. The enzyme catalyses ADP(in) + ATP(out) = ADP(out) + ATP(in). The catalysed reaction is H(+)(in) = H(+)(out). Its activity is regulated as follows. The matrix-open state (m-state) is inhibited by the membrane-permeable bongkrekic acid (BKA). The cytoplasmic-open state (c-state) is inhibited by the membrane-impermeable toxic inhibitor carboxyatractyloside (CATR). Proton transporter activity is inhibited by ADP:ATP antiporter activity. ADP:ATP antiporter that mediates import of ADP into the mitochondrial matrix for ATP synthesis, and export of ATP out to fuel the cell. Cycles between the cytoplasmic-open state (c-state) and the matrix-open state (m-state): operates by the alternating access mechanism with a single substrate-binding site intermittently exposed to either the cytosolic (c-state) or matrix (m-state) side of the inner mitochondrial membrane. In addition to its ADP:ATP antiporter activity, also involved in mitochondrial uncoupling and mitochondrial permeability transition pore (mPTP) activity. Plays a role in mitochondrial uncoupling by acting as a proton transporter: proton transport uncouples the proton flows via the electron transport chain and ATP synthase to reduce the efficiency of ATP production and cause mitochondrial thermogenesis. Proton transporter activity is inhibited by ADP:ATP antiporter activity, suggesting that SLC25A4/ANT1 acts as a master regulator of mitochondrial energy output by maintaining a delicate balance between ATP production (ADP:ATP antiporter activity) and thermogenesis (proton transporter activity). Proton transporter activity requires free fatty acids as cofactor, but does not transport it. Probably mediates mitochondrial uncoupling in tissues that do not express UCP1. Also plays a key role in mPTP opening, a non-specific pore that enables free passage of the mitochondrial membranes to solutes of up to 1.5 kDa, and which contributes to cell death. It is however unclear if SLC25A4/ANT1 constitutes a pore-forming component of mPTP or regulates it. Acts as a regulator of mitophagy independently of ADP:ATP antiporter activity: promotes mitophagy via interaction with TIMM44, leading to inhibit the presequence translocase TIMM23, thereby promoting stabilization of PINK1. In Bos taurus (Bovine), this protein is ADP/ATP translocase 1.